We begin with the raw amino-acid sequence, 134 residues long: UPF0102 protein SYNW1051 (134 aa).

The protein belongs to the UPF0102 family.

This Parasynechococcus marenigrum (strain WH8102) protein is UPF0102 protein SYNW1051.